Consider the following 91-residue polypeptide: Small ribosomal subunit protein bS6 (91 aa).

This sequence belongs to the bacterial ribosomal protein bS6 family.

In terms of biological role, binds together with bS18 to 16S ribosomal RNA. The protein is Small ribosomal subunit protein bS6 of Leptospira biflexa serovar Patoc (strain Patoc 1 / Ames).